The following is a 90-amino-acid chain: RNA-binding protein Hfq (90 aa).

Residues 9 to 68 (DPFLNALRRERVPVSIYLVNGIKLQGQVESFDQFVILLKNTVSQMVYKHAISTVVPARPF) form the Sm domain.

The protein belongs to the Hfq family. Homohexamer.

In terms of biological role, RNA chaperone that binds small regulatory RNA (sRNAs) and mRNAs to facilitate mRNA translational regulation in response to envelope stress, environmental stress and changes in metabolite concentrations. Also binds with high specificity to tRNAs. The chain is RNA-binding protein Hfq from Shewanella oneidensis (strain ATCC 700550 / JCM 31522 / CIP 106686 / LMG 19005 / NCIMB 14063 / MR-1).